The following is a 526-amino-acid chain: MSTLFLIGIHEIEKSQTIVQNEHYFDRVIELQDLDSLMVALYKDRVSPFPNVHNFETGVSIVLYDPSKFQLSVRQLDVLFKRFFPSFNISAIDHTREENLQRLECVERENSICRNRITRINHWMYHHHDDTPDGINKNSYGTVNGNSVPTQACEANIYTLLLHLNDSKAQHLRKASVPRLIRNIEFMSFLSDPIEKISQEGSHYWNILSTWDFCALSLSTQELIWCGFTLIKKLSKDAKVLIADNKLLLLLFTLESSYHQVNKFHNFRHAIDVMQATWRLCTYLLKDNPVQTLLLCMAAIGHDVGHPGTNNQLLCNCESEVAQNFKNVSILENFHRELFQQLLSEHWPQLLSISKKKFDFISEAILATDMALHSQYEDRLMHENPMKQITLISLIIKAADISNVTRTLSISARWAYLITLEFNDCALLETFHKAHRPEQDCFGDSYKNVDSPKEDLESIQNILVNVTDPDDIIKDHPHIPNGQIFFINTFAEVFFNALSQKFSGLKFLSDNVKINKEYWMKHKKPQ.

The region spanning 182–526 (RNIEFMSFLS…EYWMKHKKPQ (345 aa)) is the PDEase domain. His265 functions as the Proton donor in the catalytic mechanism. 4 residues coordinate a divalent metal cation: His269, His302, Asp303, and Asp400.

The protein belongs to the cyclic nucleotide phosphodiesterase family. Monomer. The cofactor is a divalent metal cation.

The catalysed reaction is 3',5'-cyclic AMP + H2O = AMP + H(+). Controls the level of cAMP in yeast cells, together with the low-affinity cAMP phosphodiesterase (PDE1). In Saccharomyces cerevisiae (strain ATCC 204508 / S288c) (Baker's yeast), this protein is 3',5'-cyclic-nucleotide phosphodiesterase 2.